A 95-amino-acid chain; its full sequence is UPF0381 protein HI_0400 (95 aa).

This sequence belongs to the UPF0381 family.

This chain is UPF0381 protein HI_0400, found in Haemophilus influenzae (strain ATCC 51907 / DSM 11121 / KW20 / Rd).